The chain runs to 435 residues: Serine/threonine-protein kinase 40 (435 aa).

The span at Met1 to Ala10 shows a compositional bias: basic and acidic residues. The segment at Met1–Ser25 is disordered. A Protein kinase domain is found at Phe35–Ile331. ATP is bound by residues Leu41–Ile49 and Lys66. Arg196 (proton acceptor) is an active-site residue.

It belongs to the protein kinase superfamily. CAMK Ser/Thr protein kinase family. In terms of tissue distribution, strongly expressed in heart, brain, placenta, lung, skeletal muscle, kidney, spleen, thymus, prostate, liver, pancreas, testis, ovary, small intestine, colon and peripheral blood leukocytes.

It is found in the nucleus. It localises to the cytoplasm. It catalyses the reaction L-seryl-[protein] + ATP = O-phospho-L-seryl-[protein] + ADP + H(+). The catalysed reaction is L-threonyl-[protein] + ATP = O-phospho-L-threonyl-[protein] + ADP + H(+). In terms of biological role, may be a negative regulator of NF-kappa-B and p53-mediated gene transcription. This is Serine/threonine-protein kinase 40 (STK40) from Homo sapiens (Human).